Here is a 272-residue protein sequence, read N- to C-terminus: MSTGLVNAREKEYLHLHRIDKHKCSHSSATSSPSSAASSESSRTRQRRSDGEVYGSRHNNYKSSSQHRRRSRSGSDSPQVRHYSGRTSRDRQRMRQARDHPQASRCIGVFGLNTNTTQQKVRELFNKFGPIERIQMVIDAHTHRSRGFCFIYFENLGDARVAKDACTGMEVDGRRIRVDYSITQRAHTPTPGVYMGRPSRPLGRRSRERDYSTRDTSRSRRRHRDESSSVSPYDSNRRKYRSRHRYDRSRSRTRSYSRSRSPRKPVRVQSRY.

Disordered stretches follow at residues 21-102 (KHKC…DHPQ) and 182-272 (ITQR…QSRY). Positions 26–41 (HSSATSSPSSAASSES) are enriched in low complexity. A compositionally biased stretch (basic and acidic residues) spans 87–102 (TSRDRQRMRQARDHPQ). One can recognise an RRM domain in the interval 105 to 183 (RCIGVFGLNT…RRIRVDYSIT (79 aa)). The linker stretch occupies residues 184 to 204 (QRAHTPTPGVYMGRPSRPLGR). Residues 205 to 218 (RSRERDYSTRDTSR) are compositionally biased toward basic and acidic residues. The span at 238 to 266 (RKYRSRHRYDRSRSRTRSYSRSRSPRKPV) shows a compositional bias: basic residues.

The protein belongs to the splicing factor SR family. Post-translationally, extensively phosphorylated on serine residues in the RS domain.

Required for female sex determination in somatic cells and for spermatogenesis in male germ cells. Positive regulator of female-specific splicing and/or polyadenylation of doublesex (dsx) pre-mRNA. Splicing requires an enhancer complex, dsxRE (dsx repeat element: which contains six copies of a 13-nucleotide repeat and a purine-rich enhancer (PRE)). DsxRE is formed through cooperative interactions between tra, tra2 and the sr proteins, and these interactions require both the repeat sequences and PRE. PRE is required for specific binding of tra2 to the dsxRE. Protein-RNA and protein-protein interactions are involved in tra-2 dependent activation and repression of alternative splicing. In Drosophila virilis (Fruit fly), this protein is Transformer-2 sex-determining protein (tra2).